Consider the following 447-residue polypeptide: Exodeoxyribonuclease 7 large subunit (447 aa).

Belongs to the XseA family. Heterooligomer composed of large and small subunits.

The protein localises to the cytoplasm. The catalysed reaction is Exonucleolytic cleavage in either 5'- to 3'- or 3'- to 5'-direction to yield nucleoside 5'-phosphates.. Its function is as follows. Bidirectionally degrades single-stranded DNA into large acid-insoluble oligonucleotides, which are then degraded further into small acid-soluble oligonucleotides. This chain is Exodeoxyribonuclease 7 large subunit, found in Lactiplantibacillus plantarum (strain ATCC BAA-793 / NCIMB 8826 / WCFS1) (Lactobacillus plantarum).